The sequence spans 100 residues: Large ribosomal subunit protein bL21 (100 aa).

The protein belongs to the bacterial ribosomal protein bL21 family. In terms of assembly, part of the 50S ribosomal subunit. Contacts protein L20.

This protein binds to 23S rRNA in the presence of protein L20. The sequence is that of Large ribosomal subunit protein bL21 from Mycoplasma pneumoniae (strain ATCC 29342 / M129 / Subtype 1) (Mycoplasmoides pneumoniae).